The following is a 240-amino-acid chain: Phosphoribosylaminoimidazole-succinocarboxamide synthase (240 aa).

It belongs to the SAICAR synthetase family.

It catalyses the reaction 5-amino-1-(5-phospho-D-ribosyl)imidazole-4-carboxylate + L-aspartate + ATP = (2S)-2-[5-amino-1-(5-phospho-beta-D-ribosyl)imidazole-4-carboxamido]succinate + ADP + phosphate + 2 H(+). Its pathway is purine metabolism; IMP biosynthesis via de novo pathway; 5-amino-1-(5-phospho-D-ribosyl)imidazole-4-carboxamide from 5-amino-1-(5-phospho-D-ribosyl)imidazole-4-carboxylate: step 1/2. This is Phosphoribosylaminoimidazole-succinocarboxamide synthase from Wolbachia sp. subsp. Brugia malayi (strain TRS).